Consider the following 125-residue polypeptide: MARIASVNIPDNKRLVVSLTYIYGLGPTMAAEICNKAKISKDKKVKELTDQELIGLRNIIESEYKVEGDLRREVTLNIKKKKDIRCYQGLRHIRKLPVRGQNTHSNARTRKGKAIAIAGKKKAVK.

The protein belongs to the universal ribosomal protein uS13 family. Part of the 30S ribosomal subunit. Forms a loose heterodimer with protein S19. Forms two bridges to the 50S subunit in the 70S ribosome.

Located at the top of the head of the 30S subunit, it contacts several helices of the 16S rRNA. In the 70S ribosome it contacts the 23S rRNA (bridge B1a) and protein L5 of the 50S subunit (bridge B1b), connecting the 2 subunits; these bridges are implicated in subunit movement. Contacts the tRNAs in the A and P-sites. This Rickettsia africae (strain ESF-5) protein is Small ribosomal subunit protein uS13.